A 173-amino-acid polypeptide reads, in one-letter code: 16S rRNA aminocarboxypropyltransferase (173 aa).

Residues T25, L72, L96, and S115 each coordinate S-adenosyl-L-methionine.

The protein belongs to the TDD superfamily. TSR3 family.

Its subcellular location is the cytoplasm. It catalyses the reaction an N(1)-methylpseudouridine in rRNA + S-adenosyl-L-methionine = N(1)-methyl-N(3)-[(3S)-3-amino-3-carboxypropyl]pseudouridine in rRNA + S-methyl-5'-thioadenosine + H(+). In terms of biological role, aminocarboxypropyltransferase that catalyzes the aminocarboxypropyl transfer on pseudouridine corresponding to position 914 in M.jannaschii 16S rRNA. It constitutes the last step in biosynthesis of the hypermodified N1-methyl-N3-(3-amino-3-carboxypropyl) pseudouridine (m1acp3-Psi). The sequence is that of 16S rRNA aminocarboxypropyltransferase from Methanosarcina mazei (strain ATCC BAA-159 / DSM 3647 / Goe1 / Go1 / JCM 11833 / OCM 88) (Methanosarcina frisia).